A 188-amino-acid chain; its full sequence is uncharacterized protein (188 aa).

This is an uncharacterized protein from Methanocaldococcus jannaschii (strain ATCC 43067 / DSM 2661 / JAL-1 / JCM 10045 / NBRC 100440) (Methanococcus jannaschii).